Reading from the N-terminus, the 138-residue chain is Ribosome-binding factor A (138 aa).

This sequence belongs to the RbfA family. In terms of assembly, monomer. Binds 30S ribosomal subunits, but not 50S ribosomal subunits or 70S ribosomes.

Its subcellular location is the cytoplasm. Its function is as follows. One of several proteins that assist in the late maturation steps of the functional core of the 30S ribosomal subunit. Associates with free 30S ribosomal subunits (but not with 30S subunits that are part of 70S ribosomes or polysomes). Required for efficient processing of 16S rRNA. May interact with the 5'-terminal helix region of 16S rRNA. The polypeptide is Ribosome-binding factor A (Bradyrhizobium sp. (strain BTAi1 / ATCC BAA-1182)).